The sequence spans 78 residues: UPF0349 protein RBAM_029300 (78 aa).

The protein belongs to the UPF0349 family.

The protein is UPF0349 protein RBAM_029300 of Bacillus velezensis (strain DSM 23117 / BGSC 10A6 / LMG 26770 / FZB42) (Bacillus amyloliquefaciens subsp. plantarum).